The sequence spans 77 residues: MKEQKLIHEGLITESLPNGMFRVRLDNEDLILGYVSGRIRRSFIRILPGDRVKIEVSSYDSTKGRIIYRLRNKDSND.

Residues M1 to R71 form the S1-like domain.

Belongs to the IF-1 family. Component of the 30S ribosomal translation pre-initiation complex which assembles on the 30S ribosome in the order IF-2 and IF-3, IF-1 and N-formylmethionyl-tRNA(fMet); mRNA recruitment can occur at any time during PIC assembly.

The protein resides in the plastid. Its subcellular location is the chloroplast. Its function is as follows. One of the essential components for the initiation of protein synthesis. Stabilizes the binding of IF-2 and IF-3 on the 30S subunit to which N-formylmethionyl-tRNA(fMet) subsequently binds. Helps modulate mRNA selection, yielding the 30S pre-initiation complex (PIC). Upon addition of the 50S ribosomal subunit IF-1, IF-2 and IF-3 are released leaving the mature 70S translation initiation complex. The protein is Translation initiation factor IF-1, chloroplastic of Drimys granadensis.